Reading from the N-terminus, the 1171-residue chain is Phytochrome B (1171 aa).

Residues Met-1–Ala-19 are compositionally biased toward low complexity. The tract at residues Met-1–Ala-53 is disordered. The span at Ala-38–Ala-52 shows a compositional bias: gly residues. The 184-residue stretch at Asp-259 to Leu-442 folds into the GAF domain. Cys-364 is a binding site for phytochromobilin. PAS domains follow at residues Val-661–Asp-732 and Asp-795–Leu-866. In terms of domain architecture, Histidine kinase spans Tyr-943–Gln-1161.

This sequence belongs to the phytochrome family. Homodimer. Contains one covalently linked phytochromobilin chromophore.

Functionally, regulatory photoreceptor which exists in two forms that are reversibly interconvertible by light: the Pr form that absorbs maximally in the red region of the spectrum and the Pfr form that absorbs maximally in the far-red region. Photoconversion of Pr to Pfr induces an array of morphogenic responses, whereas reconversion of Pfr to Pr cancels the induction of those responses. Pfr controls the expression of a number of nuclear genes including those encoding the small subunit of ribulose-bisphosphate carboxylase, chlorophyll A/B binding protein, protochlorophyllide reductase, rRNA, etc. It also controls the expression of its own gene(s) in a negative feedback fashion. This chain is Phytochrome B (PHYB), found in Oryza sativa subsp. indica (Rice).